The primary structure comprises 116 residues: Ribonuclease P protein component (116 aa).

This sequence belongs to the RnpA family. As to quaternary structure, consists of a catalytic RNA component (M1 or rnpB) and a protein subunit.

It catalyses the reaction Endonucleolytic cleavage of RNA, removing 5'-extranucleotides from tRNA precursor.. RNaseP catalyzes the removal of the 5'-leader sequence from pre-tRNA to produce the mature 5'-terminus. It can also cleave other RNA substrates such as 4.5S RNA. The protein component plays an auxiliary but essential role in vivo by binding to the 5'-leader sequence and broadening the substrate specificity of the ribozyme. This is Ribonuclease P protein component from Acholeplasma laidlawii (strain PG-8A).